The sequence spans 270 residues: 4-hydroxy-tetrahydrodipicolinate reductase (270 aa).

NAD(+) is bound by residues 8-13, aspartate 34, 102-104, and 128-131; these read GALGRM, GTT, and SQNY. The active-site Proton donor/acceptor is the histidine 160. Histidine 161 is a binding site for (S)-2,3,4,5-tetrahydrodipicolinate. The Proton donor role is filled by lysine 164. 170 to 171 is a binding site for (S)-2,3,4,5-tetrahydrodipicolinate; that stretch reads GT.

It belongs to the DapB family.

The protein resides in the cytoplasm. The enzyme catalyses (S)-2,3,4,5-tetrahydrodipicolinate + NAD(+) + H2O = (2S,4S)-4-hydroxy-2,3,4,5-tetrahydrodipicolinate + NADH + H(+). The catalysed reaction is (S)-2,3,4,5-tetrahydrodipicolinate + NADP(+) + H2O = (2S,4S)-4-hydroxy-2,3,4,5-tetrahydrodipicolinate + NADPH + H(+). It participates in amino-acid biosynthesis; L-lysine biosynthesis via DAP pathway; (S)-tetrahydrodipicolinate from L-aspartate: step 4/4. Catalyzes the conversion of 4-hydroxy-tetrahydrodipicolinate (HTPA) to tetrahydrodipicolinate. The polypeptide is 4-hydroxy-tetrahydrodipicolinate reductase (Methanococcus vannielii (strain ATCC 35089 / DSM 1224 / JCM 13029 / OCM 148 / SB)).